The primary structure comprises 100 residues: Large ribosomal subunit protein uL23 (100 aa).

It belongs to the universal ribosomal protein uL23 family. In terms of assembly, part of the 50S ribosomal subunit. Contacts protein L29, and trigger factor when it is bound to the ribosome.

One of the early assembly proteins it binds 23S rRNA. One of the proteins that surrounds the polypeptide exit tunnel on the outside of the ribosome. Forms the main docking site for trigger factor binding to the ribosome. This Prochlorococcus marinus (strain MIT 9313) protein is Large ribosomal subunit protein uL23.